The following is a 341-amino-acid chain: MEGVDCSMALADAAAGSPRDLSLVPERLQRREQERQIEVERRKQKRQDQEVEEEKSGFFAAAFARERAAVEELLRGEASAERLEEAANRLQGLRKLLNDSVLFLAAYDLRQGQAALAQLQAVLTERRQELQPKKRFAFKARKKDAAGTAQVDAAPVTSAAPSPPVTKEEEGAPGASWACGFSNLESQDLEKRAEELHQRDVLLSDLTNCTVKLCGNPNTLRLAKARGCKVLCGPVTTSVFLEDCRDCVLAVACQQLRVHTTKDTRVFLQVTSRAIVEDCSGIQFAPYTWSYPGIDKDFQDSGLDRSKNNWDQVDDFNWLARNVASPNWSILPEEERDIQWD.

Residue methionine 1 is modified to N-acetylmethionine. Residues 34–49 (ERQIEVERRKQKRQDQ) are compositionally biased toward basic and acidic residues. Residues 34 to 55 (ERQIEVERRKQKRQDQEVEEEK) are disordered. At serine 79 the chain carries Phosphoserine. Positions 148–173 (TAQVDAAPVTSAAPSPPVTKEEEGAP) are disordered. The 156-residue stretch at 163–318 (PPVTKEEEGA…NWDQVDDFNW (156 aa)) folds into the C-CAP/cofactor C-like domain.

Belongs to the TBCC family. Supercomplex made of cofactors A to E. Cofactors A and D function by capturing and stabilizing tubulin in a quasi-native conformation. Cofactor E binds to the cofactor D-tubulin complex; interaction with cofactor C then causes the release of tubulin polypeptides that are committed to the native state.

Its subcellular location is the cytoplasm. Tubulin-folding protein; involved in the final step of the tubulin folding pathway. This is Tubulin-specific chaperone C (Tbcc) from Mus musculus (Mouse).